Reading from the N-terminus, the 312-residue chain is Terpene synthase 8 (312 aa).

Residues 96–101 carry the DDxx(x)D/E motif motif; sequence DDYIYE. The short motif at 224 to 232 is the NDxxSxxxD/E motif element; the sequence is NDCGSFKME.

This sequence belongs to the terpene synthase family.

It catalyses the reaction (2E,6E)-farnesyl diphosphate + H2O = discoidol + diphosphate. It functions in the pathway sesquiterpene biosynthesis. Functionally, terpene synthase; part of the gene cluster that mediates the biosynthesis of the trisnorsesquiterpene discodiene which has a function during later stages of multicellular development, during the transition from fingers to Mexican hats. The terpene synthase tps8 converts its substrate farnesyl diphosphate (FDP) into the bicyclic sesquiterpene alcohol discoidol. The cytochrome P450 monooxygenase cyp521A1 then catalyzes the oxidative degradation of discoidol to form the trisnorsesquiterpene discodiene. This is Terpene synthase 8 from Dictyostelium discoideum (Social amoeba).